The chain runs to 267 residues: L-aspartate dehydrogenase (267 aa).

Alanine 124 and asparagine 190 together coordinate NAD(+). Histidine 218 is an active-site residue.

It belongs to the L-aspartate dehydrogenase family.

It carries out the reaction L-aspartate + NADP(+) + H2O = oxaloacetate + NH4(+) + NADPH + H(+). It catalyses the reaction L-aspartate + NAD(+) + H2O = oxaloacetate + NH4(+) + NADH + H(+). It functions in the pathway cofactor biosynthesis; NAD(+) biosynthesis; iminoaspartate from L-aspartate (dehydrogenase route): step 1/1. In terms of biological role, specifically catalyzes the NAD or NADP-dependent dehydrogenation of L-aspartate to iminoaspartate. In Methanococcus maripaludis (strain C5 / ATCC BAA-1333), this protein is L-aspartate dehydrogenase.